Reading from the N-terminus, the 342-residue chain is MDDKPNPEALSDSSERLFSFGVIADVQFADLEDGFNFQGTRRRYYRHSLLHLQGAIEDWNNESSMPCCVLQLGDIIDGYNAQYNASKKSLELVMDMFKRLKVPVHHTWGNHEFYNFSREYLTHSKLNTKFLEDQIVHHPETMPSEDYYAYHFVPFPKFRFILLDAYDLSVLGVDQSSPKYEQCMKILREHNPNTELNSPQGLSEPQFVQFNGGFSQEQLNWLNEVLTFSDTNQEKVVIVSHLPIYPDASDNVCLAWNYRDALAVIWSHECVVCFFAGHTHDGGYSEDPFGVYHVNLEGVIETAPDSQAFGTVHVYPDKMMLKGRGRVPDRIMNYKKERAFHC.

N-acetylmethionine is present on methionine 1. Zn(2+) contacts are provided by aspartate 25, glutamine 27, aspartate 74, asparagine 110, histidine 241, histidine 278, and histidine 280.

This sequence belongs to the ADPRibase-Mn family. In terms of assembly, monomer. Mg(2+) serves as cofactor.

It catalyses the reaction CDP-choline + H2O = phosphocholine + CMP + 2 H(+). The catalysed reaction is ADP-D-ribose + H2O = D-ribose 5-phosphate + AMP + 2 H(+). The enzyme catalyses CDP-glycerol + H2O = sn-glycerol 3-phosphate + CMP + 2 H(+). Functionally, hydrolyzes ADP-ribose, IDP-ribose, CDP-glycerol, CDP-choline and CDP-ethanolamine, but not other non-reducing ADP-sugars or CDP-glucose. May be involved in immune cell signaling as suggested by the second-messenger role of ADP-ribose, which activates TRPM2 as a mediator of oxidative/nitrosative stress. The protein is Manganese-dependent ADP-ribose/CDP-alcohol diphosphatase (ADPRM) of Homo sapiens (Human).